Consider the following 210-residue polypeptide: Na(+)-translocating NADH-quinone reductase subunit D (210 aa).

6 consecutive transmembrane segments (helical) span residues 9–29 (AVLF…LGIC), 42–62 (LIMS…ISTI), 72–92 (IIVQ…VLQA), 96–116 (ATAK…IVMG), 131–151 (FLDG…VGFI), and 178–198 (MGLL…IWVL).

This sequence belongs to the NqrDE/RnfAE family. Composed of six subunits; NqrA, NqrB, NqrC, NqrD, NqrE and NqrF.

It localises to the cell inner membrane. The enzyme catalyses a ubiquinone + n Na(+)(in) + NADH + H(+) = a ubiquinol + n Na(+)(out) + NAD(+). In terms of biological role, NQR complex catalyzes the reduction of ubiquinone-1 to ubiquinol by two successive reactions, coupled with the transport of Na(+) ions from the cytoplasm to the periplasm. NqrA to NqrE are probably involved in the second step, the conversion of ubisemiquinone to ubiquinol. The sequence is that of Na(+)-translocating NADH-quinone reductase subunit D from Pseudoalteromonas translucida (strain TAC 125).